The sequence spans 270 residues: Pantoate kinase (270 aa).

This sequence belongs to the GHMP kinase family. PoK subfamily.

It carries out the reaction (R)-pantoate + ATP = (R)-4-phosphopantoate + ADP + H(+). It participates in cofactor biosynthesis; coenzyme A biosynthesis. In terms of biological role, phosphorylates (R)-pantoate to form (R)-4-phosphopantoate in the CoA biosynthesis pathway. The chain is Pantoate kinase from Methanocaldococcus jannaschii (strain ATCC 43067 / DSM 2661 / JAL-1 / JCM 10045 / NBRC 100440) (Methanococcus jannaschii).